A 383-amino-acid polypeptide reads, in one-letter code: MTATEALLRVLLLLLAFGHSTYGAECFPACNPQNGFCEDDNVCRCQPGWQGPLCDQCVTSPGCLHGLCGEPGQCICTDGWDGELCDRDVRACSSAPCANNRTCVSLDDGLYECSCAPGYSGKDCQKKDGPCVINGSPCQHGGTCVDDEGRASHASCLCPPGFSGNFCEIVANSCTPNPCENDGVCTDIGGDFRCRCPAGFIDKTCSRPVTNCASSPCQNGGTCLQHTQVSYECLCKPEFTGLTCVKKRALSPQQVTRLPSGYGLAYRLTPGVHELPVQQPEHRILKVSMKELNKKTPLLTEGQAICFTILGVLTSLVVLGTVGIVFLNKCETWVSNLRYNHMLRKKKNLLLQYNSGEDLAVNIIFPEKIDMTTFSKEAGDEEI.

Positions 1–23 (MTATEALLRVLLLLLAFGHSTYG) are cleaved as a signal peptide. EGF-like domains lie at 24–55 (AECF…PLCD), 53–86 (LCDQ…ELCD), 88–125 (DVRA…KDCQ), 127–168 (KDGP…NFCE), 170–206 (VANS…KTCS), and 208–245 (PVTN…LTCV). Residues 24-303 (AECFPACNPQ…KKTPLLTEGQ (280 aa)) lie on the Extracellular side of the membrane. Cystine bridges form between Cys26-Cys37, Cys30-Cys43, Cys45-Cys54, Cys57-Cys68, Cys63-Cys74, Cys76-Cys85, Cys92-Cys103, Cys97-Cys113, Cys115-Cys124, Cys131-Cys144, Cys138-Cys156, and Cys158-Cys167. Ser94 carries an O-linked (GalNAc...) serine glycan. Asn100 carries N-linked (GlcNAc...) asparagine glycosylation. Thr143 carries an O-linked (GalNAc...) threonine glycan. Ser163 carries an O-linked (GalNAc...) serine; partial glycan. N-linked (GlcNAc...) asparagine; atypical; partial glycosylation is found at Asn165 and Asn172. 6 disulfide bridges follow: Cys174/Cys185, Cys179/Cys194, Cys196/Cys205, Cys212/Cys223, Cys217/Cys233, and Cys235/Cys244. An O-linked (GalNAc...) serine glycan is attached at Ser214. O-linked (GalNAc...) threonine; partial glycosylation is present at Thr222. Ser251 is a glycosylation site (O-linked (GalNAc...) serine; partial). Thr256 is a glycosylation site (O-linked (GalNAc...) threonine). Ser260 is a glycosylation site (O-linked (GalNAc...) serine; partial). A helical transmembrane segment spans residues 304-327 (AICFTILGVLTSLVVLGTVGIVFL). The Cytoplasmic segment spans residues 328–383 (NKCETWVSNLRYNHMLRKKKNLLLQYNSGEDLAVNIIFPEKIDMTTFSKEAGDEEI).

In terms of assembly, monomer. Interacts with SH3RF2. N- and O-glycosylated. O-glycosylated with core 1 or possibly core 8 glycans. Found within the stromal cells in close contact to the vascular structure of placental villi, yolk sac, fetal liver, adrenal cortex and pancreas and in the beta cells of the islets of Langerhans in the adult pancreas. Found also in some forms of neuroendocrine lung tumor tissue.

Its subcellular location is the membrane. The protein resides in the cytoplasm. In terms of biological role, may have a role in neuroendocrine differentiation. This is Protein delta homolog 1 (DLK1) from Homo sapiens (Human).